The sequence spans 183 residues: Ribosome rescue factor SmrB (183 aa).

The Smr domain occupies 98–173 (LDLHGLTQKQ…GDAALLVLIE (76 aa)).

The protein belongs to the SmrB family. As to quaternary structure, associates with collided ribosomes, but not with correctly translating polysomes.

In terms of biological role, acts as a ribosome collision sensor. Detects stalled/collided disomes (pairs of ribosomes where the leading ribosome is stalled and a second ribosome has collided with it) and endonucleolytically cleaves mRNA at the 5' boundary of the stalled ribosome. Stalled/collided disomes form a new interface (primarily via the 30S subunits) that binds SmrB. Cleaved mRNA becomes available for tmRNA ligation, leading to ribosomal subunit dissociation and rescue of stalled ribosomes. The sequence is that of Ribosome rescue factor SmrB from Erwinia tasmaniensis (strain DSM 17950 / CFBP 7177 / CIP 109463 / NCPPB 4357 / Et1/99).